The primary structure comprises 76 residues: Acyl carrier protein (76 aa).

In terms of domain architecture, Carrier spans methionine 1 to glutamine 76. At serine 36 the chain carries O-(pantetheine 4'-phosphoryl)serine.

This sequence belongs to the acyl carrier protein (ACP) family. In terms of processing, 4'-phosphopantetheine is transferred from CoA to a specific serine of apo-ACP by AcpS. This modification is essential for activity because fatty acids are bound in thioester linkage to the sulfhydryl of the prosthetic group.

It localises to the cytoplasm. Its pathway is lipid metabolism; fatty acid biosynthesis. Its function is as follows. Carrier of the growing fatty acid chain in fatty acid biosynthesis. The chain is Acyl carrier protein from Mannheimia succiniciproducens (strain KCTC 0769BP / MBEL55E).